The primary structure comprises 391 residues: GTPase Obg (391 aa).

Positions 1–159 (MKFVDEARIL…RELMLELMLL (159 aa)) constitute an Obg domain. Residues 160–333 (ADVGMLGMPN…LCWDIMEFMK (174 aa)) enclose the OBG-type G domain. Residues 166 to 173 (GMPNAGKS), 191 to 195 (FTTLV), 213 to 216 (DIPG), 283 to 286 (NKVD), and 314 to 316 (SAI) each bind GTP. Mg(2+) contacts are provided by Ser-173 and Thr-193.

This sequence belongs to the TRAFAC class OBG-HflX-like GTPase superfamily. OBG GTPase family. Monomer. Requires Mg(2+) as cofactor.

It is found in the cytoplasm. In terms of biological role, an essential GTPase which binds GTP, GDP and possibly (p)ppGpp with moderate affinity, with high nucleotide exchange rates and a fairly low GTP hydrolysis rate. Plays a role in control of the cell cycle, stress response, ribosome biogenesis and in those bacteria that undergo differentiation, in morphogenesis control. The protein is GTPase Obg of Photorhabdus laumondii subsp. laumondii (strain DSM 15139 / CIP 105565 / TT01) (Photorhabdus luminescens subsp. laumondii).